A 757-amino-acid polypeptide reads, in one-letter code: Nitrogen fixation protein FixI (757 aa).

The Cytoplasmic portion of the chain corresponds to 1 to 121; the sequence is MSCCASSAAI…GEEEGDDLLK (121 aa). One can recognise an HMA domain in the interval 37–107; the sequence is RQTELSVPNA…AIAERGYQTH (71 aa). The a metal cation site is built by cysteine 48 and cysteine 51. The helical transmembrane segment at 122-143 threads the bilayer; the sequence is QLILAVAVSGFAATNIMLLSVS. Residues 144 to 158 lie on the Extracellular side of the membrane; the sequence is VWSGADAATRDLFHW. Residues 159-178 traverse the membrane as a helical segment; it reads ISALIAGPALIYAGRFFYKS. Residues 179 to 185 are Cytoplasmic-facing; the sequence is AWNAIRH. Residues 186 to 206 traverse the membrane as a helical segment; sequence GRTNMDVPIALAVSLSYGMSL. The Extracellular segment spans residues 207–218; that stretch reads HETIGHGEHAWF. The chain crosses the membrane as a helical span at residues 219-239; it reads DASVTLLFFLLIGRTLDHMMR. The Cytoplasmic portion of the chain corresponds to 240-368; that stretch reads GRARTAISGL…RARYRRIADR (129 aa). A helical transmembrane segment spans residues 369-391; that stretch reads AARYYSPAVHLLALLTFVGWMLV. Residues 392 to 398 are Extracellular-facing; the sequence is EGDVRHA. The helical transmembrane segment at 399–416 threads the bilayer; that stretch reads MLVAVAVLIITCPCALGL. Over 417 to 688 the chain is Cytoplasmic; the sequence is AVPVVQVVAA…ETSRHAGQLI (272 aa). Aspartate 454 functions as the 4-aspartylphosphate intermediate in the catalytic mechanism. Mg(2+) contacts are provided by aspartate 634 and aspartate 638. The chain crosses the membrane as a helical span at residues 689–708; the sequence is RQNFALAIGYNVIAVPIAIL. Topologically, residues 709–713 are extracellular; the sequence is GYATP. The chain crosses the membrane as a helical span at residues 714–732; the sequence is LVAAVAMSSSSLVVVFNAL. At 733–757 the chain is on the cytoplasmic side; that stretch reads RLKRSLAAGRGATPGTLIHSGAVTS.

This sequence belongs to the cation transport ATPase (P-type) (TC 3.A.3) family. Type IB subfamily.

Its subcellular location is the cell membrane. It carries out the reaction ATP + H2O = ADP + phosphate + H(+). Functionally, fixI is a pump of a specific cation involved in symbiotic nitrogen fixation. The four proteins FixG, FixH, FixI, and FixS may participate in a membrane-bound complex coupling the FixI cation pump with a redox process catalyzed by FixG. This is Nitrogen fixation protein FixI (fixI) from Rhizobium meliloti (strain 1021) (Ensifer meliloti).